The primary structure comprises 223 residues: Thylakoid lumenal 15.0 kDa protein 2, chloroplastic (223 aa).

The protein resides in the plastid. It is found in the chloroplast thylakoid lumen. In Arabidopsis thaliana (Mouse-ear cress), this protein is Thylakoid lumenal 15.0 kDa protein 2, chloroplastic.